The primary structure comprises 929 residues: Dual serine/threonine and tyrosine protein kinase (929 aa).

Low complexity predominate over residues 1 to 14 (MEGDGVPWGSEPVS). Residues 1–21 (MEGDGVPWGSEPVSGPGPGGG) form a disordered region. Coiled-coil stretches lie at residues 189-215 (EEDL…MHHA) and 395-431 (RKKE…KEEL). Residues 652 to 906 (PKLGQELGRG…PLLGIVQPML (255 aa)) enclose the Protein kinase domain. ATP is bound by residues 658-666 (LGRGQYGVV) and Lys-681. The active-site Proton acceptor is Asp-777.

It belongs to the protein kinase superfamily. Ser/Thr protein kinase family. Predominantly expressed in skeletal muscle and testis. Expressed in basolateral and apical membranes of all tubular epithelia. Expressed in thin ascending limb of the loop of Henle and the distal convoluted tubule. Expressed in all layers of transitional ureteric epithelium and in the ureteric smooth-muscle cells. Weakly expressed in heart, brain, placenta, kidney, pancreas, spleen, thymus, prostate, uterus, small intestine, white blood cells, stomach, spinal cord and adrenal gland. Is widely distributed in the CNS. Also detected in several tumor cell lines. Expressed in the skin.

Its subcellular location is the cytoplasm. It localises to the cell membrane. It is found in the apical cell membrane. The protein localises to the basolateral cell membrane. The protein resides in the cell junction. It carries out the reaction L-seryl-[protein] + ATP = O-phospho-L-seryl-[protein] + ADP + H(+). The enzyme catalyses L-threonyl-[protein] + ATP = O-phospho-L-threonyl-[protein] + ADP + H(+). The catalysed reaction is L-tyrosyl-[protein] + ATP = O-phospho-L-tyrosyl-[protein] + ADP + H(+). Functionally, acts as a positive regulator of ERK phosphorylation downstream of fibroblast growth factor-receptor activation. Involved in the regulation of both caspase-dependent apoptosis and caspase-independent cell death. In the skin, it plays a predominant role in suppressing caspase-dependent apoptosis in response to UV stress in a range of dermal cell types. This is Dual serine/threonine and tyrosine protein kinase (DSTYK) from Homo sapiens (Human).